We begin with the raw amino-acid sequence, 237 residues long: DNA repair protein RecO (237 aa).

This sequence belongs to the RecO family.

Involved in DNA repair and RecF pathway recombination. This Rickettsia conorii (strain ATCC VR-613 / Malish 7) protein is DNA repair protein RecO.